The primary structure comprises 1700 residues: Rho guanine nucleotide exchange factor 28 (1700 aa).

The disordered stretch occupies residues 288–335 (TERATMPSGAAETEEEVRNLESGRSPSEEEEDGQLVKSQADGPSEQED). 3 positions are modified to phosphoserine: Ser-312, Ser-314, and Ser-478. Residues 483–525 (VADSEEEGRSEPPICYAVGSQSSPRTGLPGGDELDSFDANTEP) form a disordered region. The residue at position 623 (Ser-623) is a Phosphoserine. A Phorbol-ester/DAG-type zinc finger spans residues 651–698 (RHQFVPGTFSGVLQCSGCDKTLLGKESLQCANCKANTHKGCKDTVPPC). The segment covering 709 to 720 (NKPQTILGSSSV) has biased composition (polar residues). Disordered stretches follow at residues 709 to 761 (NKPQ…VPGT) and 774 to 799 (ESEGDSNSWRSRSHSDELFQSMGSSP). The segment covering 728 to 737 (LSLHPSPSMP) has biased composition (low complexity). Over residues 774–783 (ESEGDSNSWR) the composition is skewed to polar residues. A DH domain is found at 848-1043 (KRQDVIFELM…KDMIAAVDLK (196 aa)). The PH domain occupies 1085–1187 (ALLHDGLVYW…WMRRIQQAVE (103 aa)). Residues 1186–1207 (VESCPEEEGGRTSESDEERRKA) form a disordered region. Residues 1193-1207 (EGGRTSESDEERRKA) are compositionally biased toward basic and acidic residues. Residues 1294-1303 (DVSQPSEEGP) form an interaction with PTK2/FAK1; required for regulation of axonal branching and synapse formation region. The interval 1369–1380 (IIQAIQNLTRLL) is mediates cytoplasmic retention and interaction with YWHAH. An interaction with microtubules region spans residues 1421-1700 (QEKSRYLEKH…DGAEENIVYL (280 aa)). Residues 1473–1522 (ERECQSQEELLLRHRSELDHQLQEYQQNLERLREGQRMVERERQRMRDQQ) are a coiled coil. The tract at residues 1493–1524 (QLQEYQQNLERLREGQRMVERERQRMRDQQGL) is RNA-binding. Ser-1535 is subject to Phosphoserine. Residues 1563-1576 (FLNDAFTHMSLNTS) form a mediates cytoplasmic retention and interaction with MAPK8IP1 region. The tract at residues 1574–1598 (NTSNKPNPSGAPWDAHPPGGSHLDL) is disordered. Ser-1604 is subject to Phosphoserine. A disordered region spans residues 1612-1700 (VSQPSDVNSE…DGAEENIVYL (89 aa)). Residues 1613 to 1623 (SQPSDVNSELW) are compositionally biased toward polar residues. A compositionally biased stretch (basic and acidic residues) spans 1633–1642 (ARQESIKDSC). Over residues 1647-1672 (DLNSFQTESPDPQDSNQRGPQPQTLI) the composition is skewed to polar residues.

In terms of assembly, homooligomer; forms cytoplasmic aggregates. Forms a complex with MAPK8 and MAPK8IP1. Interacts with RHOA. Interacts with microtubules. Interacts with YWHAE and YWHAH. Interacts with PTK2/FAK1. Interacts with NEFL. Interacts with CTNND2; prevents interaction with RHOA. Phosphorylated on tyrosine upon stimulation of cells by laminin.

It is found in the cytoplasm. Its subcellular location is the cell membrane. In terms of biological role, functions as a RHOA-specific guanine nucleotide exchange factor regulating signaling pathways downstream of integrins and growth factor receptors. Functions in axonal branching, synapse formation and dendritic morphogenesis. Also functions in focal adhesion formation, cell motility and B-lymphocytes activation. May regulate NEFL expression and aggregation and play a role in apoptosis. In Rattus norvegicus (Rat), this protein is Rho guanine nucleotide exchange factor 28 (Arhgef28).